The chain runs to 654 residues: Acetyl-coenzyme A synthetase (654 aa).

CoA-binding positions include Arg-190–Lys-193 and Thr-313. Residues Gly-389–Pro-391, Asp-413–Thr-418, Asp-504, and Arg-519 contribute to the ATP site. Ser-527 provides a ligand contact to CoA. Position 530 (Arg-530) interacts with ATP. Positions 541 and 546 each coordinate Mg(2+). Lys-613 carries the N6-acetyllysine modification.

This sequence belongs to the ATP-dependent AMP-binding enzyme family. Requires Mg(2+) as cofactor. Post-translationally, acetylated. Deacetylation by the SIR2-homolog deacetylase activates the enzyme.

The enzyme catalyses acetate + ATP + CoA = acetyl-CoA + AMP + diphosphate. In terms of biological role, catalyzes the conversion of acetate into acetyl-CoA (AcCoA), an essential intermediate at the junction of anabolic and catabolic pathways. AcsA undergoes a two-step reaction. In the first half reaction, AcsA combines acetate with ATP to form acetyl-adenylate (AcAMP) intermediate. In the second half reaction, it can then transfer the acetyl group from AcAMP to the sulfhydryl group of CoA, forming the product AcCoA. The polypeptide is Acetyl-coenzyme A synthetase (Leptospira borgpetersenii serovar Hardjo-bovis (strain JB197)).